The primary structure comprises 364 residues: Doublecortin domain-containing protein 2C (364 aa).

2 consecutive Doublecortin domains span residues 16–98 and 136–217; these read KTIV…LDYI and RHIN…FPYW. The disordered stretch occupies residues 233–255; the sequence is VEKNSQRKKKVDSKGKEPCKYDG.

As to expression, expressed in testis and spermatozoa (at protein level).

Its subcellular location is the cell projection. It localises to the cilium. The protein localises to the flagellum. The protein resides in the cytoplasm. The sequence is that of Doublecortin domain-containing protein 2C from Homo sapiens (Human).